A 452-amino-acid polypeptide reads, in one-letter code: Bifunctional protein GlmU (452 aa).

Residues 1–226 (MVAVAILAAG…SQEILGINDR (226 aa)) form a pyrophosphorylase region. Residues 7 to 10 (LAAG), Lys21, Gln73, and 78 to 79 (GT) each bind UDP-N-acetyl-alpha-D-glucosamine. Mg(2+) is bound at residue Asp103. UDP-N-acetyl-alpha-D-glucosamine-binding residues include Gly140, Glu155, Asn170, and Asn224. Asn224 lines the Mg(2+) pocket. The interval 227-247 (LQLADSFRILQERIRQQWMLA) is linker. The segment at 248-452 (GVTLVDPTSI…ENWSTPTTEQ (205 aa)) is N-acetyltransferase. Arg329 and Lys347 together coordinate UDP-N-acetyl-alpha-D-glucosamine. His359 serves as the catalytic Proton acceptor. The UDP-N-acetyl-alpha-D-glucosamine site is built by Tyr362 and Asn373. Residues Ala376, 382-383 (NY), Ala419, and Arg436 contribute to the acetyl-CoA site.

The protein in the N-terminal section; belongs to the N-acetylglucosamine-1-phosphate uridyltransferase family. In the C-terminal section; belongs to the transferase hexapeptide repeat family. Homotrimer. Mg(2+) serves as cofactor.

The protein resides in the cytoplasm. It carries out the reaction alpha-D-glucosamine 1-phosphate + acetyl-CoA = N-acetyl-alpha-D-glucosamine 1-phosphate + CoA + H(+). The enzyme catalyses N-acetyl-alpha-D-glucosamine 1-phosphate + UTP + H(+) = UDP-N-acetyl-alpha-D-glucosamine + diphosphate. Its pathway is nucleotide-sugar biosynthesis; UDP-N-acetyl-alpha-D-glucosamine biosynthesis; N-acetyl-alpha-D-glucosamine 1-phosphate from alpha-D-glucosamine 6-phosphate (route II): step 2/2. The protein operates within nucleotide-sugar biosynthesis; UDP-N-acetyl-alpha-D-glucosamine biosynthesis; UDP-N-acetyl-alpha-D-glucosamine from N-acetyl-alpha-D-glucosamine 1-phosphate: step 1/1. It functions in the pathway bacterial outer membrane biogenesis; LPS lipid A biosynthesis. Its function is as follows. Catalyzes the last two sequential reactions in the de novo biosynthetic pathway for UDP-N-acetylglucosamine (UDP-GlcNAc). The C-terminal domain catalyzes the transfer of acetyl group from acetyl coenzyme A to glucosamine-1-phosphate (GlcN-1-P) to produce N-acetylglucosamine-1-phosphate (GlcNAc-1-P), which is converted into UDP-GlcNAc by the transfer of uridine 5-monophosphate (from uridine 5-triphosphate), a reaction catalyzed by the N-terminal domain. This Synechococcus sp. (strain ATCC 27144 / PCC 6301 / SAUG 1402/1) (Anacystis nidulans) protein is Bifunctional protein GlmU.